The chain runs to 472 residues: Probable diguanylate cyclase DgcF (472 aa).

The next 8 helical transmembrane spans lie at 21–41, 44–64, 90–110, 128–148, 167–187, 198–218, 237–257, and 273–293; these read SIAIFALTTLFYFIGAELRLV, LSLFWPLNGVMAGVFARYVWL, VSLAINFSNMMFIVTVALLVV, LFNYCLIAALLCAIVGAIGSV, FSTGVLIVPCMLTLAIPGVLP, IALIVSVIASVVIGGAGSLAF, LLTFVTGAVEIVLVANSVIDI, and LGIATMAICPIMVSFSVAAIN. In terms of domain architecture, GGDEF spans 330-467; that stretch reads QHLTVMLLDI…GRNRTSTMRY (138 aa). Residues Asp-338 and Ile-339 each coordinate Mg(2+). Asn-346, His-351, and Asp-355 together coordinate substrate. Mg(2+) is bound at residue Glu-381.

In terms of assembly, homodimer. Requires Mg(2+) as cofactor.

It localises to the cell membrane. It catalyses the reaction 2 GTP = 3',3'-c-di-GMP + 2 diphosphate. It functions in the pathway purine metabolism; 3',5'-cyclic di-GMP biosynthesis. Catalyzes the synthesis of cyclic-di-GMP (c-di-GMP) via the condensation of 2 GTP molecules. This chain is Probable diguanylate cyclase DgcF, found in Escherichia coli O157:H7.